Reading from the N-terminus, the 73-residue chain is Putative defensin-like protein 42 (73 aa).

4 disulfide bridges follow: Cys-6–Cys-58, Cys-18–Cys-41, Cys-27–Cys-50, and Cys-31–Cys-52.

Belongs to the DEFL family.

This chain is Putative defensin-like protein 42, found in Arabidopsis thaliana (Mouse-ear cress).